Here is a 182-residue protein sequence, read N- to C-terminus: MLQALLIFVLQIIYVPILTIRTILLVKNQTRSAAGVGLLEGAIYIVSLGIVFQDLSNWMNIVAYVIGFSTGLLLGGYIENKLAIGYITYQVSLLDRCNELVDELRHSGFGVTVFEGEGINSIRYRLDIVAKRSREKELLEIINKIAPKAFMSSYEIRSFKGGYLTKAMKKRALMKKKDEHAS.

The next 3 helical transmembrane spans lie at 6–26 (LIFVLQIIYVPILTIRTILLV), 32–52 (SAAGVGLLEGAIYIVSLGIVF), and 58–78 (WMNIVAYVIGFSTGLLLGGYI).

Belongs to the UPF0316 family.

It localises to the cell membrane. The sequence is that of UPF0316 protein BCG9842_B1857 from Bacillus cereus (strain G9842).